A 690-amino-acid chain; its full sequence is Elongation factor G (690 aa).

Residues 8–283 (EDYRNFGIMA…AVVDYLPSPV (276 aa)) form the tr-type G domain. GTP is bound by residues 17–24 (AHIDAGKT), 81–85 (DTPGH), and 135–138 (NKMD).

The protein belongs to the TRAFAC class translation factor GTPase superfamily. Classic translation factor GTPase family. EF-G/EF-2 subfamily.

The protein resides in the cytoplasm. In terms of biological role, catalyzes the GTP-dependent ribosomal translocation step during translation elongation. During this step, the ribosome changes from the pre-translocational (PRE) to the post-translocational (POST) state as the newly formed A-site-bound peptidyl-tRNA and P-site-bound deacylated tRNA move to the P and E sites, respectively. Catalyzes the coordinated movement of the two tRNA molecules, the mRNA and conformational changes in the ribosome. The protein is Elongation factor G of Rhodopseudomonas palustris (strain BisB5).